Here is a 387-residue protein sequence, read N- to C-terminus: Mannitol-1-phosphate 5-dehydrogenase (387 aa).

An NAD(+)-binding site is contributed by 3–14 (ALHFGAGNIGRG).

This sequence belongs to the mannitol dehydrogenase family.

The enzyme catalyses D-mannitol 1-phosphate + NAD(+) = beta-D-fructose 6-phosphate + NADH + H(+). This chain is Mannitol-1-phosphate 5-dehydrogenase, found in Yersinia pseudotuberculosis serotype O:1b (strain IP 31758).